The primary structure comprises 181 residues: Bifunctional protein PyrR (181 aa).

Residues 39–40 (RR), 104–112 (DDVLYTGRT), arginine 137, and valine 161 contribute to the substrate site. A PRPP-binding motif is present at residues 100–112 (VILVDDVLYTGRT).

This sequence belongs to the purine/pyrimidine phosphoribosyltransferase family. PyrR subfamily.

It carries out the reaction UMP + diphosphate = 5-phospho-alpha-D-ribose 1-diphosphate + uracil. Its function is as follows. Regulates the transcription of the pyrimidine nucleotide (pyr) operon in response to exogenous pyrimidines. Functionally, also displays a weak uracil phosphoribosyltransferase activity which is not physiologically significant. In Pasteurella multocida (strain Pm70), this protein is Bifunctional protein PyrR.